Reading from the N-terminus, the 474-residue chain is tRNA-2-methylthio-N(6)-dimethylallyladenosine synthase (474 aa).

The region spanning 3-120 (KKLHIKTWGC…LPEMINSVRG (118 aa)) is the MTTase N-terminal domain. The [4Fe-4S] cluster site is built by Cys12, Cys49, Cys83, Cys157, Cys161, and Cys164. Positions 143–375 (RAEGPTAFVS…QERINQQAMA (233 aa)) constitute a Radical SAM core domain. Residues 378–441 (RRMLGSTQRI…PNSLRGKVVR (64 aa)) form the TRAM domain.

Belongs to the methylthiotransferase family. MiaB subfamily. In terms of assembly, monomer. Requires [4Fe-4S] cluster as cofactor.

It is found in the cytoplasm. The catalysed reaction is N(6)-dimethylallyladenosine(37) in tRNA + (sulfur carrier)-SH + AH2 + 2 S-adenosyl-L-methionine = 2-methylsulfanyl-N(6)-dimethylallyladenosine(37) in tRNA + (sulfur carrier)-H + 5'-deoxyadenosine + L-methionine + A + S-adenosyl-L-homocysteine + 2 H(+). Its function is as follows. Catalyzes the methylthiolation of N6-(dimethylallyl)adenosine (i(6)A), leading to the formation of 2-methylthio-N6-(dimethylallyl)adenosine (ms(2)i(6)A) at position 37 in tRNAs that read codons beginning with uridine. In Salmonella arizonae (strain ATCC BAA-731 / CDC346-86 / RSK2980), this protein is tRNA-2-methylthio-N(6)-dimethylallyladenosine synthase.